The following is a 314-amino-acid chain: Glycine--tRNA ligase alpha subunit (314 aa).

This sequence belongs to the class-II aminoacyl-tRNA synthetase family. In terms of assembly, tetramer of two alpha and two beta subunits.

Its subcellular location is the cytoplasm. It carries out the reaction tRNA(Gly) + glycine + ATP = glycyl-tRNA(Gly) + AMP + diphosphate. The chain is Glycine--tRNA ligase alpha subunit from Leuconostoc citreum (strain KM20).